The following is a 2195-amino-acid chain: COPII coat assembly protein SEC16 (2195 aa).

The segment covering Met-1–Lys-20 has biased composition (basic residues). The segment at Met-1–Ser-112 is disordered. Basic and acidic residues-rich tracts occupy residues Lys-21–Glu-32 and Ser-49–Ser-59. At Ser-28 the chain carries Phosphoserine. Residues Val-66–Gln-79 are compositionally biased toward polar residues. Ser-73 carries the phosphoserine modification. A compositionally biased stretch (basic and acidic residues) spans Gln-86–Thr-102. The residue at position 144 (Ser-144) is a Phosphoserine. Disordered stretches follow at residues Pro-201 to Asp-233, Asn-247 to His-381, Thr-436 to Arg-555, Gly-594 to Asn-616, and Ser-643 to Val-708. A compositionally biased stretch (polar residues) spans Glu-210–His-219. Residues Glu-257 to Ile-276 are compositionally biased toward basic and acidic residues. A compositionally biased stretch (polar residues) spans Ala-282–Pro-292. Residue Ser-313 is modified to Phosphoserine. The segment covering Asp-314–Asn-329 has biased composition (basic and acidic residues). The segment covering Glu-330–Asn-341 has biased composition (polar residues). Basic and acidic residues-rich tracts occupy residues Thr-342–His-381 and Ser-450–Pro-479. Phosphoserine is present on residues Ser-472 and Ser-483. Polar residues predominate over residues Ser-489–Glu-501. The segment covering Glu-512–Thr-533 has biased composition (acidic residues). Polar residues-rich tracts occupy residues Val-534–Ser-545 and Gly-594–Asn-604. Thr-595 is subject to Phosphothreonine. Phosphoserine occurs at positions 607, 660, 663, 665, 674, 678, 681, 701, 704, 706, 759, 762, 765, 768, 843, 1511, 1515, 1578, 1602, 1603, 1611, and 1617. Residues Arg-657 to Ser-666 show a composition bias toward polar residues. The segment covering Glu-693–Val-708 has biased composition (polar residues). 2 disordered regions span residues Val-1656–Pro-1731 and Gly-1751–Asn-1804. Residues Met-1673 to His-1682 are compositionally biased toward basic and acidic residues. Polar residues-rich tracts occupy residues Asp-1683–Lys-1693 and Glu-1775–Leu-1786. Residues Ser-1778 and Ser-1875 each carry the phosphoserine modification. Positions Ser-1917 to Glu-1936 are disordered. Ser-1973, Ser-1986, and Ser-1992 each carry phosphoserine. A disordered region spans residues Asp-1976–Lys-2031. The segment covering Val-1981–Ser-1992 has biased composition (acidic residues). Basic and acidic residues predominate over residues Asp-1994–Ser-2023. Residue Thr-2049 is modified to Phosphothreonine. Residues Glu-2054–Ile-2072 show a composition bias toward basic and acidic residues. Positions Glu-2054 to Gln-2195 are disordered. Ser-2130 is modified (phosphoserine). Positions Pro-2131–Ser-2143 are enriched in pro residues.

This sequence belongs to the SEC16 family. As to quaternary structure, interacts with SEC23, SEC31 and SED4.

The protein localises to the endoplasmic reticulum membrane. In terms of biological role, involved in the initiation of assembly of the COPII coat required for the formation of transport vesicles from the endoplasmic reticulum (ER) and the selection of cargo molecules. Also involved in autophagy. This is COPII coat assembly protein SEC16 (SEC16) from Saccharomyces cerevisiae (strain ATCC 204508 / S288c) (Baker's yeast).